The primary structure comprises 76 residues: Sec-independent protein translocase protein TatA (76 aa).

A helical membrane pass occupies residues 1 to 21 (MGSFSIWHWLVVLAIVVLVFG). The interval 41–76 (EGMKGAEEESTPPPPAQQVTGHSIKSEIEEKDQTKV) is disordered. Over residues 64 to 76 (IKSEIEEKDQTKV) the composition is skewed to basic and acidic residues.

It belongs to the TatA/E family. The Tat system comprises two distinct complexes: a TatABC complex, containing multiple copies of TatA, TatB and TatC subunits, and a separate TatA complex, containing only TatA subunits. Substrates initially bind to the TatABC complex, which probably triggers association of the separate TatA complex to form the active translocon.

The protein resides in the cell inner membrane. In terms of biological role, part of the twin-arginine translocation (Tat) system that transports large folded proteins containing a characteristic twin-arginine motif in their signal peptide across membranes. TatA could form the protein-conducting channel of the Tat system. The sequence is that of Sec-independent protein translocase protein TatA from Nitrosomonas europaea (strain ATCC 19718 / CIP 103999 / KCTC 2705 / NBRC 14298).